We begin with the raw amino-acid sequence, 248 residues long: Ribosomal RNA small subunit methyltransferase J (248 aa).

Residues arginine 98–aspartate 99, glutamate 114–arginine 115, serine 150–serine 151, and aspartate 168 contribute to the S-adenosyl-L-methionine site.

It belongs to the methyltransferase superfamily. RsmJ family.

The protein localises to the cytoplasm. The enzyme catalyses guanosine(1516) in 16S rRNA + S-adenosyl-L-methionine = N(2)-methylguanosine(1516) in 16S rRNA + S-adenosyl-L-homocysteine + H(+). Specifically methylates the guanosine in position 1516 of 16S rRNA. The protein is Ribosomal RNA small subunit methyltransferase J of Shewanella baltica (strain OS223).